We begin with the raw amino-acid sequence, 138 residues long: ATP synthase epsilon chain (138 aa).

Belongs to the ATPase epsilon chain family. F-type ATPases have 2 components, CF(1) - the catalytic core - and CF(0) - the membrane proton channel. CF(1) has five subunits: alpha(3), beta(3), gamma(1), delta(1), epsilon(1). CF(0) has three main subunits: a, b and c.

The protein resides in the cell inner membrane. Produces ATP from ADP in the presence of a proton gradient across the membrane. The protein is ATP synthase epsilon chain of Geobacter metallireducens (strain ATCC 53774 / DSM 7210 / GS-15).